We begin with the raw amino-acid sequence, 136 residues long: T-cell receptor beta chain V region LB2 (136 aa).

Positions 1–21 (MNKWVFCWVTLCLLTVETTHG) are cleaved as a signal peptide. The tract at residues 22–116 (DGGIITQTPK…EMTVFLCASS (95 aa)) is v segment. Cys-45 and Cys-113 form a disulfide bridge. Residues 117-120 (IRLA) are d segment. A j segment region spans residues 121–136 (SAETLYFGSGTRLTVL).

The chain is T-cell receptor beta chain V region LB2 from Mus musculus (Mouse).